We begin with the raw amino-acid sequence, 239 residues long: 1-(5-phosphoribosyl)-5-[(5-phosphoribosylamino)methylideneamino] imidazole-4-carboxamide isomerase (239 aa).

The Proton acceptor role is filled by D8. The active-site Proton donor is D129.

The protein belongs to the HisA/HisF family.

It localises to the cytoplasm. The catalysed reaction is 1-(5-phospho-beta-D-ribosyl)-5-[(5-phospho-beta-D-ribosylamino)methylideneamino]imidazole-4-carboxamide = 5-[(5-phospho-1-deoxy-D-ribulos-1-ylimino)methylamino]-1-(5-phospho-beta-D-ribosyl)imidazole-4-carboxamide. Its pathway is amino-acid biosynthesis; L-histidine biosynthesis; L-histidine from 5-phospho-alpha-D-ribose 1-diphosphate: step 4/9. The polypeptide is 1-(5-phosphoribosyl)-5-[(5-phosphoribosylamino)methylideneamino] imidazole-4-carboxamide isomerase (Bacillus cereus (strain Q1)).